We begin with the raw amino-acid sequence, 125 residues long: MDYEILFSDETMNYADAGTYCQSRGMALVSSAMRDSTMVKAILAFTEVKGHDYWVGADNLQDGAYNFLWNDGVSLPTDSDLWSPNEPSNPQSWQLCVQIWSKYNLLDDVGCGGARRVICEKELDD.

Residues 1–120 form the C-type lectin domain; it reads MDYEILFSDE…CGGARRVICE (120 aa). 2 cysteine pairs are disulfide-bonded: C21-C119 and C96-C111.

In terms of assembly, homodimer.

Role in the defense system of the organism against microorganisms. This calcium-binding lectin binds galactose. The chain is Lectin from Polyandrocarpa misakiensis (Tunicate).